A 245-amino-acid chain; its full sequence is Lactate utilization protein A (245 aa).

Belongs to the LutA/YkgE family.

Is involved in L-lactate degradation and allows cells to grow with lactate as the sole carbon source. The sequence is that of Lactate utilization protein A from Macrococcus caseolyticus (strain JCSC5402) (Macrococcoides caseolyticum).